A 319-amino-acid chain; its full sequence is G-protein coupled receptor 55 (319 aa).

The Extracellular segment spans residues 1 to 21; it reads MSQQNTSGDCLFDGVNELMKT. N5 carries N-linked (GlcNAc...) asparagine glycosylation. The helical transmembrane segment at 22 to 42 threads the bilayer; the sequence is LQFAVHIPTFVLGLLLNLLAI. Residues 43–58 lie on the Cytoplasmic side of the membrane; sequence HGFSTFLKNRWPDYAA. A helical transmembrane segment spans residues 59–79; it reads TSIYMINLAVFDLLLVLSLPF. Over 80–94 the chain is Extracellular; that stretch reads KMVLSQVQSPFPSLC. The helical transmembrane segment at 95 to 115 threads the bilayer; it reads TLVECLYFVSMYGSVFTICFI. Over 116–137 the chain is Cytoplasmic; sequence SMDRFLAIRYPLLVSHLRSPRK. Residues 138 to 158 form a helical membrane-spanning segment; that stretch reads IFGICCTIWVLVWTGSIPIYS. Topologically, residues 159–180 are extracellular; it reads FHGKVEKYMCFHNMSDDTWSAK. The N-linked (GlcNAc...) asparagine glycan is linked to N171. A helical transmembrane segment spans residues 181 to 201; it reads VFFPLEVFGFLLPMGIMGFCC. Over 202 to 231 the chain is Cytoplasmic; it reads SRSIHILLGRRDHTQDWVQQKACIYSIAAS. The chain crosses the membrane as a helical span at residues 232–252; it reads LAVFVVSFLPVHLGFFLQFLV. At 253 to 271 the chain is on the extracellular side; that stretch reads RNSFIVECRAKQSISFFLQ. The chain crosses the membrane as a helical span at residues 272–292; it reads LSMCFSNVNCCLDVFCYYFVI. The Cytoplasmic portion of the chain corresponds to 293-319; sequence KEFRMNIRAHRPSRVQLVLQDTTISRG.

This sequence belongs to the G-protein coupled receptor 1 family. As to expression, expressed in the caudate nucleus and putamen, but not detected in the hippocampus, thalamus, pons cerebellum, frontal cortex of the brain or in the liver. Expressed in osteoclasts and osteoblasts. Higly expressed in macrophages and B-cells.

Its subcellular location is the cell membrane. Its function is as follows. G-protein coupled receptor that binds to several ligands including 2-arachidonoyl lysophosphatidylinositol or lysophosphatidylglucoside with high affinity, leading to rapid and transient activation of numerous intracellular signaling pathways. Induces the Ca(2+) release from intracellular stores via ERK, the heterotrimeric G protein GNA13 and RHOA leading to morphological changes including cell rounding and stress fiber formation. In macrophages, acts downstream of lysophosphatidylglucoside to inhibit the translocation of the phospholipid-transporting ABCA1 to plasma membrane and subsequent cholesterol efflux leading to lipid accumulation and foam cell formation. The chain is G-protein coupled receptor 55 (GPR55) from Homo sapiens (Human).